Reading from the N-terminus, the 124-residue chain is Small ribosomal subunit protein uS13 (124 aa).

Residues 87-124 (GSYRGNRHRKRLPVRGQRTKTNSRTRKGKRRTVGSKTK) are disordered. Over residues 91-124 (GNRHRKRLPVRGQRTKTNSRTRKGKRRTVGSKTK) the composition is skewed to basic residues.

The protein belongs to the universal ribosomal protein uS13 family. As to quaternary structure, part of the 30S ribosomal subunit. Forms a loose heterodimer with protein S19. Forms two bridges to the 50S subunit in the 70S ribosome.

Functionally, located at the top of the head of the 30S subunit, it contacts several helices of the 16S rRNA. In the 70S ribosome it contacts the 23S rRNA (bridge B1a) and protein L5 of the 50S subunit (bridge B1b), connecting the 2 subunits; these bridges are implicated in subunit movement. Contacts the tRNAs in the A and P-sites. The sequence is that of Small ribosomal subunit protein uS13 from Elusimicrobium minutum (strain Pei191).